The following is a 380-amino-acid chain: Chaperone protein DnaJ (380 aa).

The J domain occupies 5-70 (DFYEVLGVSR…QKRAAYDQYG (66 aa)). The CR-type zinc finger occupies 135–213 (GCEKDIEIPT…CHGDGRVQKT (79 aa)). Zn(2+)-binding residues include Cys-148, Cys-151, Cys-165, Cys-168, Cys-187, Cys-190, Cys-201, and Cys-204. 4 CXXCXGXG motif repeats span residues 148–155 (CEPCDGTG), 165–172 (CSTCHGQG), 187–194 (CPTCHGKG), and 201–208 (CNSCHGDG).

The protein belongs to the DnaJ family. As to quaternary structure, homodimer. The cofactor is Zn(2+).

Its subcellular location is the cytoplasm. Its function is as follows. Participates actively in the response to hyperosmotic and heat shock by preventing the aggregation of stress-denatured proteins and by disaggregating proteins, also in an autonomous, DnaK-independent fashion. Unfolded proteins bind initially to DnaJ; upon interaction with the DnaJ-bound protein, DnaK hydrolyzes its bound ATP, resulting in the formation of a stable complex. GrpE releases ADP from DnaK; ATP binding to DnaK triggers the release of the substrate protein, thus completing the reaction cycle. Several rounds of ATP-dependent interactions between DnaJ, DnaK and GrpE are required for fully efficient folding. Also involved, together with DnaK and GrpE, in the DNA replication of plasmids through activation of initiation proteins. The polypeptide is Chaperone protein DnaJ (Aliivibrio salmonicida (strain LFI1238) (Vibrio salmonicida (strain LFI1238))).